We begin with the raw amino-acid sequence, 658 residues long: UvrABC system protein B (658 aa).

The Helicase ATP-binding domain maps to 25–182 (DSIRSGNKFN…LKLVDMGYKR (158 aa)). An ATP-binding site is contributed by 38-45 (GVTGSGKT). A Beta-hairpin motif is present at residues 91–114 (YYDYYQPEAYIPRQDLFIEKDSSI). In terms of domain architecture, Helicase C-terminal spans 433 to 596 (QVEVLFDRAK…TPRSASRNLE (164 aa)). The region spanning 623–658 (AKIVKELRKQMLEAAKNLEFEKAAALRDEIAKLREL) is the UVR domain.

This sequence belongs to the UvrB family. Forms a heterotetramer with UvrA during the search for lesions. Interacts with UvrC in an incision complex.

It localises to the cytoplasm. The UvrABC repair system catalyzes the recognition and processing of DNA lesions. A damage recognition complex composed of 2 UvrA and 2 UvrB subunits scans DNA for abnormalities. Upon binding of the UvrA(2)B(2) complex to a putative damaged site, the DNA wraps around one UvrB monomer. DNA wrap is dependent on ATP binding by UvrB and probably causes local melting of the DNA helix, facilitating insertion of UvrB beta-hairpin between the DNA strands. Then UvrB probes one DNA strand for the presence of a lesion. If a lesion is found the UvrA subunits dissociate and the UvrB-DNA preincision complex is formed. This complex is subsequently bound by UvrC and the second UvrB is released. If no lesion is found, the DNA wraps around the other UvrB subunit that will check the other stand for damage. This chain is UvrABC system protein B, found in Campylobacter fetus subsp. fetus (strain 82-40).